Consider the following 349-residue polypeptide: Paired box protein Pax-4 (349 aa).

The segment at residues 5 to 131 (GLSSVNQLGG…SSINRVLRAL (127 aa)) is a DNA-binding region (paired). A PAI subdomain region spans residues 8-64 (SVNQLGGLFVNGRPLPLDTRQQIVQLAIRGMRPCDISRSLKVSNGCVSKILGRYYRT). The tract at residues 83-131 (AVVARIAQLKDEYPALFAWEIQRQLCAEGLCTQDKAPSVSSINRVLRAL) is RED subdomain. A DNA-binding region (homeobox) is located at residues 170-229 (SHRNRTIFSPGQAEALEKEFQRGQYPDSVVRGKLAAATSLPEDTVRVWFSNRRAKWRRQE). A transcription repression region spans residues 278-349 (FCQLCWGAVP…APSTYYLHWP (72 aa)).

It belongs to the paired homeobox family. Specifically expressed in pancreatic islets.

The protein localises to the nucleus. Plays an important role in the differentiation and development of pancreatic islet beta cells. Transcriptional repressor that competes with PAX6 in binding to a common element in the glucagon, insulin and somatostatin promoters. This Rattus norvegicus (Rat) protein is Paired box protein Pax-4 (Pax4).